We begin with the raw amino-acid sequence, 120 residues long: MASRKDTLVRRASRVRRQIKAVANGRPRLSVHRSSKNIYAQIIDDVAGKTIASASTLDTDLRFSLKTGADTEAATAVGKLLAERASKAGVKDVVFDRGAFIYHGRIKALAEAAREGGLNF.

This sequence belongs to the universal ribosomal protein uL18 family. As to quaternary structure, part of the 50S ribosomal subunit; part of the 5S rRNA/L5/L18/L25 subcomplex. Contacts the 5S and 23S rRNAs.

Functionally, this is one of the proteins that bind and probably mediate the attachment of the 5S RNA into the large ribosomal subunit, where it forms part of the central protuberance. The polypeptide is Large ribosomal subunit protein uL18 (Sinorhizobium medicae (strain WSM419) (Ensifer medicae)).